A 274-amino-acid polypeptide reads, in one-letter code: Orotidine 5'-phosphate decarboxylase (274 aa).

The active-site Proton donor is the Lys-95.

The protein belongs to the OMP decarboxylase family. Type 2 subfamily.

It carries out the reaction orotidine 5'-phosphate + H(+) = UMP + CO2. Its pathway is pyrimidine metabolism; UMP biosynthesis via de novo pathway; UMP from orotate: step 2/2. The chain is Orotidine 5'-phosphate decarboxylase from Mycolicibacterium paratuberculosis (strain ATCC BAA-968 / K-10) (Mycobacterium paratuberculosis).